Reading from the N-terminus, the 122-residue chain is uncharacterized protein (122 aa).

Residues 9–25 (AFPSPVFLGGVFFVFFF) traverse the membrane as a helical segment.

The protein localises to the cytoplasm. It is found in the nucleus. Its subcellular location is the membrane. This is an uncharacterized protein from Saccharomyces cerevisiae (strain ATCC 204508 / S288c) (Baker's yeast).